The following is a 258-amino-acid chain: uncharacterized protein (258 aa).

The chain crosses the membrane as a helical span at residues 163-187 (GIVGAAGLMLMFADLNGIPGICLMG).

The protein resides in the membrane. This is an uncharacterized protein from Methanocaldococcus jannaschii (strain ATCC 43067 / DSM 2661 / JAL-1 / JCM 10045 / NBRC 100440) (Methanococcus jannaschii).